The primary structure comprises 637 residues: Chaperone protein HtpG (637 aa).

The tract at residues 1–345 (MSQQETHGFQ…SNDLPLNVSR (345 aa)) is a; substrate-binding. The interval 346-562 (EILQDNHITK…EGEMSSQMIK (217 aa)) is b. The interval 563–637 (LMQAAGQPVP…MNQMLLANLK (75 aa)) is c.

The protein belongs to the heat shock protein 90 family. Homodimer.

It localises to the cytoplasm. Functionally, molecular chaperone. Has ATPase activity. This chain is Chaperone protein HtpG, found in Shewanella sp. (strain MR-4).